Consider the following 350-residue polypeptide: uncharacterized protein (350 aa).

This is an uncharacterized protein from Sulfolobus islandicus filamentous virus (isolate Iceland/Hveragerdi) (SIFV).